Consider the following 225-residue polypeptide: UPF0173 metal-dependent hydrolase Fjoh_2786 (225 aa).

The protein belongs to the UPF0173 family.

This is UPF0173 metal-dependent hydrolase Fjoh_2786 from Flavobacterium johnsoniae (strain ATCC 17061 / DSM 2064 / JCM 8514 / BCRC 14874 / CCUG 350202 / NBRC 14942 / NCIMB 11054 / UW101) (Cytophaga johnsonae).